The following is a 609-amino-acid chain: Glutamine--fructose-6-phosphate aminotransferase [isomerizing] (609 aa).

The active-site Nucleophile; for GATase activity is C2. Positions 2–218 constitute a Glutamine amidotransferase type-2 domain; the sequence is CGIVGAIAQR…EGDIAEITRR (217 aa). SIS domains are found at residues 286–426 and 458–599; these read ADEL…LKGL and LAED…VDQP. The active-site For Fru-6P isomerization activity is K604.

As to quaternary structure, homodimer.

It is found in the cytoplasm. It carries out the reaction D-fructose 6-phosphate + L-glutamine = D-glucosamine 6-phosphate + L-glutamate. Its function is as follows. Catalyzes the first step in hexosamine metabolism, converting fructose-6P into glucosamine-6P using glutamine as a nitrogen source. The chain is Glutamine--fructose-6-phosphate aminotransferase [isomerizing] from Shigella flexneri.